The chain runs to 136 residues: Protein NrdI (136 aa).

It belongs to the NrdI family.

Its function is as follows. Probably involved in ribonucleotide reductase function. The chain is Protein NrdI from Salmonella newport (strain SL254).